Reading from the N-terminus, the 64-residue chain is Temporin-ALg (64 aa).

The signal sequence occupies residues 1 to 22; that stretch reads MFTLKKSLLLLFFLGTINLSLC. Positions 23 to 46 are excised as a propeptide; the sequence is EQERNAEEERRDDLGERQAEVEKR. A Leucine amide modification is found at L62.

This sequence belongs to the frog skin active peptide (FSAP) family. Temporin subfamily. Expressed by the skin glands.

Its subcellular location is the secreted. Antimicrobial peptide with activity against Gram-positive and Gram-negative bacteria and against fungi. Has been tested against S.aureus (MIC=2.5 ug/mL), B.pumilus (MIC=2.5 ug/mL), B.cereus (MIC=30.0 ug/mL), E.coli (MIC=5.0 ug/mL), B.dysenteriae (MIC=10.0 ug/mL), A.cacoaceticus (MIC=30.0 ug/mL), P.aeruginosa (MIC=7.5 ug/mL) and C.albicans (MIC=1.25 ug/mL). Also shows a weak hemolytic activity. The chain is Temporin-ALg from Amolops loloensis (Lolokou Sucker Frog).